A 130-amino-acid polypeptide reads, in one-letter code: Small ribosomal subunit protein uS9 (130 aa).

The disordered stretch occupies residues 98–130; sequence LKKAGMLTRDPRMKERKKYGLKKARKASQFSKR. The segment covering 111 to 130 has biased composition (basic residues); that stretch reads KERKKYGLKKARKASQFSKR.

The protein belongs to the universal ribosomal protein uS9 family.

The polypeptide is Small ribosomal subunit protein uS9 (Lacticaseibacillus casei (strain BL23) (Lactobacillus casei)).